A 546-amino-acid polypeptide reads, in one-letter code: Chaperonin GroEL (546 aa).

ATP contacts are provided by residues 29 to 32, lysine 50, 86 to 90, glycine 415, and aspartate 495; these read TLGP and DGTTT.

It belongs to the chaperonin (HSP60) family. In terms of assembly, forms a cylinder of 14 subunits composed of two heptameric rings stacked back-to-back. Interacts with the co-chaperonin GroES.

It localises to the cytoplasm. It catalyses the reaction ATP + H2O + a folded polypeptide = ADP + phosphate + an unfolded polypeptide.. Its function is as follows. Together with its co-chaperonin GroES, plays an essential role in assisting protein folding. The GroEL-GroES system forms a nano-cage that allows encapsulation of the non-native substrate proteins and provides a physical environment optimized to promote and accelerate protein folding. This is Chaperonin GroEL from Parabacteroides distasonis (strain ATCC 8503 / DSM 20701 / CIP 104284 / JCM 5825 / NCTC 11152).